Consider the following 794-residue polypeptide: Phenylalanine--tRNA ligase beta subunit (794 aa).

Positions 39 to 148 (APAFDNVVVA…SDAPVGQAIR (110 aa)) constitute a tRNA-binding domain. The B5 domain maps to 399–474 (PVRKPVLLRT…RLYGYDNIPS (76 aa)). 4 residues coordinate Mg(2+): Asp452, Asp458, Glu461, and Glu462. Residues 700-793 (SKFPPVIRDL…FEQAFGAQLR (94 aa)) form the FDX-ACB domain.

It belongs to the phenylalanyl-tRNA synthetase beta subunit family. Type 1 subfamily. Tetramer of two alpha and two beta subunits. Requires Mg(2+) as cofactor.

It is found in the cytoplasm. It carries out the reaction tRNA(Phe) + L-phenylalanine + ATP = L-phenylalanyl-tRNA(Phe) + AMP + diphosphate + H(+). The chain is Phenylalanine--tRNA ligase beta subunit from Dechloromonas aromatica (strain RCB).